A 222-amino-acid polypeptide reads, in one-letter code: UPF0502 protein PBPRB0676 (222 aa).

This sequence belongs to the UPF0502 family.

The sequence is that of UPF0502 protein PBPRB0676 from Photobacterium profundum (strain SS9).